A 333-amino-acid chain; its full sequence is Serine/threonine-protein phosphatase PP1-beta (333 aa).

Aspartate 63, histidine 65, aspartate 91, and asparagine 123 together coordinate Mn(2+). The active-site Proton donor is histidine 124. 2 residues coordinate Mn(2+): histidine 172 and histidine 247. The disordered stretch occupies residues 306 to 333 (GAGGVGSNRPVTPPRNAPAAQPKKGAKK). The span at 322-333 (APAAQPKKGAKK) shows a compositional bias: low complexity.

It belongs to the PPP phosphatase family. PP-1 subfamily. Interacts with lab-1; the interaction is direct. Interacts with knl-1; the interaction is direct. Mn(2+) serves as cofactor. In terms of tissue distribution, expressed in gonads, nervous system, intestine and muscles.

The protein localises to the cytoplasm. It is found in the nucleus. It carries out the reaction O-phospho-L-seryl-[protein] + H2O = L-seryl-[protein] + phosphate. It catalyses the reaction O-phospho-L-threonyl-[protein] + H2O = L-threonyl-[protein] + phosphate. Inhibited by okadaic acid. Its function is as follows. Serine/threonine-protein phosphatase essential for chromosomal dynamics during meiosis and mitosis. During meiosis, promotes chromosomal cohesion and germline immortality via a small RNA-mediated genome silencing pathway. Antagonizes the function of air-2 kinase during meiosis I and mitosis to promote chromatid cohesion and spindle attachment. Dephosphorylates histone H3 at 'Ser-10'. Dephosphorylates histone H3 at 'Thr-3'. Also involved in the activation of chloride channel clh-3 during cell swelling and meiotic maturation. Promotes small RNA-mediated genome silencing over multiple generations. Essential for embryogenesis. In Caenorhabditis elegans, this protein is Serine/threonine-protein phosphatase PP1-beta.